A 225-amino-acid polypeptide reads, in one-letter code: Redox-sensing transcriptional repressor Rex (225 aa).

The H-T-H motif DNA-binding region spans 16–55 (IYYRYLNILLDADKKRVSSTELSEAVKVDSATIRRDFSYF). Position 90–95 (90–95 (GVGNLG)) interacts with NAD(+).

The protein belongs to the transcriptional regulatory Rex family. In terms of assembly, homodimer.

It localises to the cytoplasm. Modulates transcription in response to changes in cellular NADH/NAD(+) redox state. This Lactiplantibacillus plantarum (strain ATCC BAA-793 / NCIMB 8826 / WCFS1) (Lactobacillus plantarum) protein is Redox-sensing transcriptional repressor Rex.